The following is a 143-amino-acid chain: Small ribosomal subunit protein uS12B (143 aa).

Pro62 bears the 3,4-dihydroxyproline mark.

Belongs to the universal ribosomal protein uS12 family. Component of the small ribosomal subunit (SSU). Mature yeast ribosomes consist of a small (40S) and a large (60S) subunit. The 40S small subunit contains 1 molecule of ribosomal RNA (18S rRNA) and at least 33 different proteins. The large 60S subunit contains 3 rRNA molecules (25S, 5.8S and 5S rRNA) and at least 46 different proteins. Post-translationally, hydroxylation at Pro-62 affects translation termination efficiency.

It localises to the cytoplasm. The protein localises to the nucleus. The protein resides in the nucleolus. In terms of biological role, component of the ribosome, a large ribonucleoprotein complex responsible for the synthesis of proteins in the cell. The small ribosomal subunit (SSU) binds messenger RNAs (mRNAs) and translates the encoded message by selecting cognate aminoacyl-transfer RNA (tRNA) molecules. The large subunit (LSU) contains the ribosomal catalytic site termed the peptidyl transferase center (PTC), which catalyzes the formation of peptide bonds, thereby polymerizing the amino acids delivered by tRNAs into a polypeptide chain. The nascent polypeptides leave the ribosome through a tunnel in the LSU and interact with protein factors that function in enzymatic processing, targeting, and the membrane insertion of nascent chains at the exit of the ribosomal tunnel. The chain is Small ribosomal subunit protein uS12B (rps2302) from Schizosaccharomyces pombe (strain 972 / ATCC 24843) (Fission yeast).